The following is a 475-amino-acid chain: Ribulose bisphosphate carboxylase large chain (475 aa).

A propeptide spanning residues 1–2 (MS) is cleaved from the precursor. Residue P3 is modified to N-acetylproline. K14 is subject to N6,N6,N6-trimethyllysine. K175 (proton acceptor) is an active-site residue. Residues K175 and K177 each coordinate D-ribulose 1,5-bisphosphate. Positions 201, 203, and 204 each coordinate Mg(2+). K201 carries the post-translational modification N6-carboxylysine. E204 is a D-ribulose 1,5-bisphosphate binding site. Catalysis depends on H294, which acts as the Proton acceptor. 7 residues coordinate D-ribulose 1,5-bisphosphate: R295, H327, K334, S379, G381, G403, and G404.

This sequence belongs to the RuBisCO large chain family. Type I subfamily. As to quaternary structure, heterohexadecamer of 8 large chains and 8 small chains. Heterohexadecamer; disulfide-linked. The disulfide link is formed within the large subunit homodimers. Requires Mg(2+) as cofactor. In terms of processing, the disulfide bond which can form in the large chain dimeric partners within the hexadecamer appears to be associated with oxidative stress and protein turnover.

It localises to the plastid. Its subcellular location is the chloroplast. It carries out the reaction 2 (2R)-3-phosphoglycerate + 2 H(+) = D-ribulose 1,5-bisphosphate + CO2 + H2O. The catalysed reaction is D-ribulose 1,5-bisphosphate + O2 = 2-phosphoglycolate + (2R)-3-phosphoglycerate + 2 H(+). Functionally, ruBisCO catalyzes two reactions: the carboxylation of D-ribulose 1,5-bisphosphate, the primary event in carbon dioxide fixation, as well as the oxidative fragmentation of the pentose substrate in the photorespiration process. Both reactions occur simultaneously and in competition at the same active site. Binds to abscisic acid (ABA); only half of the possible binding sites are occupied in the crystal and there are indications this is a low affinity site. The polypeptide is Ribulose bisphosphate carboxylase large chain (Pisum sativum (Garden pea)).